The sequence spans 275 residues: Putative carbamate hydrolase RutD (275 aa).

The protein belongs to the AB hydrolase superfamily. Hydrolase RutD family.

The catalysed reaction is carbamate + 2 H(+) = NH4(+) + CO2. In terms of biological role, involved in pyrimidine catabolism. May facilitate the hydrolysis of carbamate, a reaction that can also occur spontaneously. The chain is Putative carbamate hydrolase RutD from Escherichia coli O6:H1 (strain CFT073 / ATCC 700928 / UPEC).